The sequence spans 323 residues: Beta-ketoacyl-[acyl-carrier-protein] synthase III (323 aa).

Residues Cys114 and His250 contribute to the active site. Positions 251-255 (QANKR) are ACP-binding. Asn280 is an active-site residue.

It belongs to the thiolase-like superfamily. FabH family. Homodimer.

Its subcellular location is the cytoplasm. The enzyme catalyses malonyl-[ACP] + acetyl-CoA + H(+) = 3-oxobutanoyl-[ACP] + CO2 + CoA. Its pathway is lipid metabolism; fatty acid biosynthesis. In terms of biological role, catalyzes the condensation reaction of fatty acid synthesis by the addition to an acyl acceptor of two carbons from malonyl-ACP. Catalyzes the first condensation reaction which initiates fatty acid synthesis and may therefore play a role in governing the total rate of fatty acid production. Possesses both acetoacetyl-ACP synthase and acetyl transacylase activities. Its substrate specificity determines the biosynthesis of branched-chain and/or straight-chain of fatty acids. This is Beta-ketoacyl-[acyl-carrier-protein] synthase III from Hyphomonas neptunium (strain ATCC 15444).